We begin with the raw amino-acid sequence, 565 residues long: 2-(3-amino-3-carboxypropyl)histidine synthase subunit 2 (565 aa).

[4Fe-4S] cluster-binding residues include Cys139, Cys160, and Cys377. 2 disordered regions span residues 424–458 (QPAE…DLRT) and 464–483 (HTRP…DDAV).

This sequence belongs to the DPH1/DPH2 family. DPH2 subfamily. In terms of assembly, component of the 2-(3-amino-3-carboxypropyl)histidine synthase complex composed of dph1, dph2, dph3 and a NADH-dependent reductase, predominantly cbr1. [4Fe-4S] cluster is required as a cofactor.

The protein resides in the cytoplasm. Its pathway is protein modification; peptidyl-diphthamide biosynthesis. In terms of biological role, required for the first step of diphthamide biosynthesis, a post-translational modification of histidine which occurs in elongation factor 2. Dph1 and dph2 transfer a 3-amino-3-carboxypropyl (ACP) group from S-adenosyl-L-methionine (SAM) to a histidine residue, the reaction is assisted by a reduction system comprising dph3 and a NADH-dependent reductase, predominantly cbr1. Facilitates the reduction of the catalytic iron-sulfur cluster found in the dph1 subunit. The sequence is that of 2-(3-amino-3-carboxypropyl)histidine synthase subunit 2 (dph2) from Aspergillus fumigatus (strain ATCC MYA-4609 / CBS 101355 / FGSC A1100 / Af293) (Neosartorya fumigata).